The primary structure comprises 238 residues: Synapse differentiation-inducing gene protein 1-like (238 aa).

Disordered stretches follow at residues 1–24 (MESL…GPYP), 78–111 (KVKE…PGQA), and 126–155 (EEFQ…NFLT). At 1-162 (MESLSELQNP…FLTLPPRDHL (162 aa)) the chain is on the extracellular side. Over residues 133–151 (GDPEEEESDATSTESESED) the composition is skewed to acidic residues. Residues 163–183 (GLTIFSMLCCFWPLGIAAFYF) form a helical membrane-spanning segment. At 184–205 (SQGTSKAISKGDFRLANTTSRR) the chain is on the cytoplasmic side. The chain crosses the membrane as a helical span at residues 206 to 226 (ALFLATLSIAVGAGLYVAVVV). The Extracellular segment spans residues 227 to 238 (ALAAYMSQNGHS).

Belongs to the CD225/Dispanin family.

It is found in the membrane. The protein resides in the golgi apparatus. The protein localises to the cis-Golgi network. In Bos taurus (Bovine), this protein is Synapse differentiation-inducing gene protein 1-like (SYNDIG1L).